Here is a 601-residue protein sequence, read N- to C-terminus: A-type ATP synthase subunit A (601 aa).

Residue 235–242 (GGFGTGKT) participates in ATP binding.

Belongs to the ATPase alpha/beta chains family. Has multiple subunits with at least A(3), B(3), C, D, E, F, H, I and proteolipid K(x).

The protein resides in the cell membrane. It catalyses the reaction ATP + H2O + 4 H(+)(in) = ADP + phosphate + 5 H(+)(out). Functionally, component of the A-type ATP synthase that produces ATP from ADP in the presence of a proton gradient across the membrane. The A chain is the catalytic subunit. This chain is A-type ATP synthase subunit A, found in Thermofilum pendens (strain DSM 2475 / Hrk 5).